The following is a 122-amino-acid chain: MIQMQTNLDVADNSGARRVQCIKVLGGSKRKYASVGDVIVVSVKEAIPRGRVKKGDVRKAVVVRTAKEVRREDGTAIRFDRNAAVILNNNNEPMGTRIFGPVVRELRAKNFMKIISLAPEVL.

The protein belongs to the universal ribosomal protein uL14 family. Part of the 50S ribosomal subunit. Forms a cluster with proteins L3 and L19. In the 70S ribosome, L14 and L19 interact and together make contacts with the 16S rRNA in bridges B5 and B8.

In terms of biological role, binds to 23S rRNA. Forms part of two intersubunit bridges in the 70S ribosome. This is Large ribosomal subunit protein uL14 from Jannaschia sp. (strain CCS1).